Consider the following 93-residue polypeptide: Small ribosomal subunit protein uS19 (93 aa).

The protein belongs to the universal ribosomal protein uS19 family.

Its function is as follows. Protein S19 forms a complex with S13 that binds strongly to the 16S ribosomal RNA. This chain is Small ribosomal subunit protein uS19, found in Dehalococcoides mccartyi (strain ATCC BAA-2266 / KCTC 15142 / 195) (Dehalococcoides ethenogenes (strain 195)).